The following is a 478-amino-acid chain: Endoglucanase 18 (478 aa).

Residues 1–21 form the signal peptide; that stretch reads MGKLLVVMLIGMFLAFESLEA. A glycan (N-linked (GlcNAc...) asparagine) is linked at Asn29. Asp76 (nucleophile) is an active-site residue. The active site involves His398. Positions 433 to 452 are disordered; the sequence is HTGAIVGGPNSSDQYSDKRT. Residue Asn442 is glycosylated (N-linked (GlcNAc...) asparagine). Residues Asp449 and Glu458 contribute to the active site.

It belongs to the glycosyl hydrolase 9 (cellulase E) family.

The protein resides in the secreted. The catalysed reaction is Endohydrolysis of (1-&gt;4)-beta-D-glucosidic linkages in cellulose, lichenin and cereal beta-D-glucans.. The protein is Endoglucanase 18 of Arabidopsis thaliana (Mouse-ear cress).